Consider the following 205-residue polypeptide: Ribosomal RNA large subunit methyltransferase E (205 aa).

S-adenosyl-L-methionine contacts are provided by glycine 60, tryptophan 62, aspartate 80, aspartate 96, and aspartate 121. Lysine 161 serves as the catalytic Proton acceptor.

This sequence belongs to the class I-like SAM-binding methyltransferase superfamily. RNA methyltransferase RlmE family.

It is found in the cytoplasm. The enzyme catalyses uridine(2552) in 23S rRNA + S-adenosyl-L-methionine = 2'-O-methyluridine(2552) in 23S rRNA + S-adenosyl-L-homocysteine + H(+). Functionally, specifically methylates the uridine in position 2552 of 23S rRNA at the 2'-O position of the ribose in the fully assembled 50S ribosomal subunit. The sequence is that of Ribosomal RNA large subunit methyltransferase E from Azoarcus sp. (strain BH72).